The following is a 497-amino-acid chain: Methionine--tRNA ligase (497 aa).

The short motif at tyrosine 14 to histidine 24 is the 'HIGH' region element. 4 residues coordinate Zn(2+): cysteine 129, cysteine 132, cysteine 147, and histidine 150. Positions lysine 295–threonine 299 match the 'KMSKS' region motif. Lysine 298 contributes to the ATP binding site.

The protein belongs to the class-I aminoacyl-tRNA synthetase family. MetG type 2A subfamily. Monomer. Requires Zn(2+) as cofactor.

It localises to the cytoplasm. The catalysed reaction is tRNA(Met) + L-methionine + ATP = L-methionyl-tRNA(Met) + AMP + diphosphate. Functionally, is required not only for elongation of protein synthesis but also for the initiation of all mRNA translation through initiator tRNA(fMet) aminoacylation. In Aquifex aeolicus (strain VF5), this protein is Methionine--tRNA ligase (metG).